The chain runs to 118 residues: MSRSSKKSPFISYRLFNTIDKMNLKNLKQLVFTKSRSSTVFPSMVGHNISVYNGKNYVPFLILNQMISSKLGEFSRTRNFRGHKGINKKLIKKSSKKVTKNKKSIKKNIKTTSKKFKK.

A disordered region spans residues Lys-92–Lys-118.

The protein belongs to the universal ribosomal protein uS19 family.

It is found in the plastid. Functionally, protein S19 forms a complex with S13 that binds strongly to the 16S ribosomal RNA. The sequence is that of Small ribosomal subunit protein uS19c (rps19) from Euglena longa (Euglenophycean alga).